A 320-amino-acid chain; its full sequence is Pyrroline-5-carboxylate reductase 2 (320 aa).

Ser-2 carries the N-acetylserine modification. Residues 6 to 11 (IGAGQL) and Ser-34 each bind NADP(+). NADPH-binding residues include Ala-8, Gln-10, Leu-11, Ser-34, Glu-36, Asn-56, Val-70, Lys-71, and Ala-97. NADP(+) is bound by residues Asn-56, 69–72 (AVKP), and 95–97 (CAA). An L-proline-binding site is contributed by Glu-164. Asn-230 lines the NADPH pocket. L-proline is bound by residues Ala-237 and Thr-238. The segment covering 295–305 (PTVSTLTPSSP) has biased composition (low complexity). The tract at residues 295 to 320 (PTVSTLTPSSPGKLLTRSLALGGKKD) is disordered. Residue Ser-304 is modified to Phosphoserine.

Belongs to the pyrroline-5-carboxylate reductase family. In terms of assembly, homodecamer; composed of 5 homodimers. Interacts with LTO1. In terms of tissue distribution, detected in erythrocytes (at protein level). Expressed in fetal brain.

Its subcellular location is the cytoplasm. The protein resides in the mitochondrion. The catalysed reaction is L-proline + NADP(+) = (S)-1-pyrroline-5-carboxylate + NADPH + 2 H(+). The enzyme catalyses L-proline + NAD(+) = (S)-1-pyrroline-5-carboxylate + NADH + 2 H(+). Its pathway is amino-acid biosynthesis; L-proline biosynthesis; L-proline from L-glutamate 5-semialdehyde: step 1/1. Its activity is regulated as follows. Subject to competitive inhibition by NADP. Was reported not to be inhibited by proline. However other study demonstrated an inhibition by proline. Oxidoreductase that catalyzes the last step in proline biosynthesis, which corresponds to the reduction of pyrroline-5-carboxylate to L-proline using NAD(P)H. At physiologic concentrations, has higher specific activity in the presence of NADH. Involved in cellular response to oxidative stress. In some cell types, such as erythrocytes, its primary function may be the generation of NADP(+). This chain is Pyrroline-5-carboxylate reductase 2, found in Homo sapiens (Human).